We begin with the raw amino-acid sequence, 353 residues long: Methionine import ATP-binding protein MetN (353 aa).

An ABC transporter domain is found at 11 to 251 (ITFDRVEKSF…PEHPTTRSFL (241 aa)). 48–55 (GRSGAGKS) provides a ligand contact to ATP.

This sequence belongs to the ABC transporter superfamily. Methionine importer (TC 3.A.1.24) family. As to quaternary structure, the complex is composed of two ATP-binding proteins (MetN), two transmembrane proteins (MetI) and a solute-binding protein (MetQ).

Its subcellular location is the cell inner membrane. The enzyme catalyses L-methionine(out) + ATP + H2O = L-methionine(in) + ADP + phosphate + H(+). It carries out the reaction D-methionine(out) + ATP + H2O = D-methionine(in) + ADP + phosphate + H(+). Part of the ABC transporter complex MetNIQ involved in methionine import. Responsible for energy coupling to the transport system. The polypeptide is Methionine import ATP-binding protein MetN (Cereibacter sphaeroides (strain ATCC 17023 / DSM 158 / JCM 6121 / CCUG 31486 / LMG 2827 / NBRC 12203 / NCIMB 8253 / ATH 2.4.1.) (Rhodobacter sphaeroides)).